Consider the following 638-residue polypeptide: Replication protein E1 (638 aa).

Residues 84-86 (KRK) carry the Nuclear localization signal motif. Ser-90 carries the post-translational modification Phosphoserine; by host. Residues 90-119 (SQNSPLQDITNQHRQQSDSQQNTHQVNNSQ) are compositionally biased toward polar residues. Residues 90-133 (SQNSPLQDITNQHRQQSDSQQNTHQVNNSQAKRRAVDSVPDSGY) form a disordered region. The segment at 176–342 (THVNSVTQIC…QTQLEHSFDD (167 aa)) is DNA-binding region. Residues 441–591 (VNFIYFLQVL…FPFDSNGNPV (151 aa)) enclose the SF3 helicase domain. An ATP-binding site is contributed by 467 to 474 (GPPNTGKS).

The protein belongs to the papillomaviridae E1 protein family. In terms of assembly, can form hexamers. Interacts with E2 protein; this interaction increases E1 DNA binding specificity. Interacts with host DNA polymerase subunit POLA2. Interacts with host single stranded DNA-binding protein RPA1. Interacts with host TOP1; this interaction stimulates the enzymatic activity of TOP1. Phosphorylated.

It localises to the host nucleus. The enzyme catalyses Couples ATP hydrolysis with the unwinding of duplex DNA by translocating in the 3'-5' direction.. The catalysed reaction is ATP + H2O = ADP + phosphate + H(+). ATP-dependent DNA 3'-5' helicase required for initiation of viral DNA replication. It forms a complex with the viral E2 protein. The E1-E2 complex binds to the replication origin which contains binding sites for both proteins. During the initial step, a dimer of E1 interacts with a dimer of protein E2 leading to a complex that binds the viral origin of replication with high specificity. Then, a second dimer of E1 displaces the E2 dimer in an ATP-dependent manner to form the E1 tetramer. Following this, two E1 monomers are added to each half of the site, which results in the formation of two E1 trimers on the viral ori. Subsequently, two hexamers will be created. The double hexamer acts as a bi-directional helicase machinery and unwinds the viral DNA and then recruits the host DNA polymerase to start replication. The polypeptide is Replication protein E1 (Homo sapiens (Human)).